An 87-amino-acid polypeptide reads, in one-letter code: Small ribosomal subunit protein bS18B (87 aa).

The protein belongs to the bacterial ribosomal protein bS18 family. As to quaternary structure, part of the 30S ribosomal subunit. Forms a tight heterodimer with protein bS6.

In terms of biological role, binds as a heterodimer with protein bS6 to the central domain of the 16S rRNA, where it helps stabilize the platform of the 30S subunit. The sequence is that of Small ribosomal subunit protein bS18B from Mycolicibacterium vanbaalenii (strain DSM 7251 / JCM 13017 / BCRC 16820 / KCTC 9966 / NRRL B-24157 / PYR-1) (Mycobacterium vanbaalenii).